We begin with the raw amino-acid sequence, 999 residues long: Ulvan lyase, long isoform (999 aa).

An N-terminal signal peptide occupies residues 1–21; sequence MKCLKTLLVSTTLLGAFSLNA. Residue 126-127 participates in substrate binding; that stretch reads SH. H127 acts as the Proton donor/acceptor in catalysis. D189, D199, and K201 together coordinate Ca(2+). Y280 and R297 together coordinate substrate. Residues D300, D303, and Y305 each contribute to the Ca(2+) site. Y361 is a binding site for substrate.

This sequence belongs to the polysaccharide lyase 24 family.

Its function is as follows. Ulvan lyase involved in ulvan degradation. Ulvan is the main polysaccharide component of the Ulvales (green seaweed) cell wall. It is composed of disaccharide building blocks comprising 3-sulfated rhamnose (Rha3S) linked to D-glucuronic acid (GlcA), L-iduronic acid (IduA), or D-xylose (Xyl). Ulvan lyase catalyzes preferentially the endolytic cleavage of the glycosidic bond between Rha3S and the uronic acid GlcA, but not IduA, producing oligosaccharides that have unsaturated 4-deoxy-L-threo-hex-4-enopyranosiduronic acid (deltaUA) at the non-reducing end. The most abundant end products in the degradation of the ulvan polysaccharide were deltaUA-Rha3S disaccharides and deltaUA-Rha3S-IduA-Rha3S and deltaUA-Rha3S-Xyl-Rha3S tetrasaccharides. This Alteromonas sp protein is Ulvan lyase, long isoform.